The sequence spans 164 residues: Peroxynitrite isomerase (164 aa).

A GXWXGXG motif is present at residues 21–27; that stretch reads GRWGGRG. Residues K130 and H156 each coordinate heme b.

The protein belongs to the nitrobindin family. As to quaternary structure, homodimer. It depends on heme b as a cofactor.

It catalyses the reaction peroxynitrite = nitrate. The protein operates within nitrogen metabolism. Its function is as follows. Heme-binding protein able to scavenge peroxynitrite and to protect free L-tyrosine against peroxynitrite-mediated nitration, by acting as a peroxynitrite isomerase that converts peroxynitrite to nitrate. Therefore, this protein likely plays a role in peroxynitrite sensing and in the detoxification of reactive nitrogen and oxygen species (RNS and ROS, respectively). Is able to bind nitric oxide (NO) in vitro, but may act as a sensor of peroxynitrite levels in vivo. The polypeptide is Peroxynitrite isomerase (Nocardioides sp. (strain ATCC BAA-499 / JS614)).